The primary structure comprises 511 residues: Probable pectinesterase/pectinesterase inhibitor 17 (511 aa).

A signal peptide spans methionine 1–serine 23. Residues glycine 24–isoleucine 171 form a pectinesterase inhibitor 17 region. 2 N-linked (GlcNAc...) asparagine glycosylation sites follow: asparagine 112 and asparagine 160. Residues valine 237–threonine 414 are pectinesterase 17. Residues threonine 277 and glutamine 307 each contribute to the substrate site. Aspartate 330 acts as the Proton donor; for pectinesterase activity in catalysis. Cysteine 344 and cysteine 364 form a disulfide bridge. The active-site Nucleophile; for pectinesterase activity is the aspartate 351. Residues arginine 418 and tryptophan 420 each contribute to the substrate site.

In the N-terminal section; belongs to the PMEI family. It in the C-terminal section; belongs to the pectinesterase family. In terms of tissue distribution, expressed in siliques.

It is found in the secreted. The protein resides in the cell wall. The catalysed reaction is [(1-&gt;4)-alpha-D-galacturonosyl methyl ester](n) + n H2O = [(1-&gt;4)-alpha-D-galacturonosyl](n) + n methanol + n H(+). It functions in the pathway glycan metabolism; pectin degradation; 2-dehydro-3-deoxy-D-gluconate from pectin: step 1/5. In terms of biological role, acts in the modification of cell walls via demethylesterification of cell wall pectin. The polypeptide is Probable pectinesterase/pectinesterase inhibitor 17 (PME17) (Arabidopsis thaliana (Mouse-ear cress)).